We begin with the raw amino-acid sequence, 339 residues long: Transcription initiation factor IIB (339 aa).

The TFIIB-type zinc-finger motif lies at 39-70; that stretch reads EELICPVCGSKNIIKDYERAEIVCEMCGCVLQ. Positions 43, 46, 62, and 65 each coordinate Zn(2+). 2 consecutive repeat copies span residues 156–239 and 250–331.

It belongs to the TFIIB family.

Its function is as follows. Stabilizes TBP binding to an archaeal box-A promoter. Also responsible for recruiting RNA polymerase II to the pre-initiation complex (DNA-TBP-TFIIB). The polypeptide is Transcription initiation factor IIB (Methanococcus maripaludis (strain C6 / ATCC BAA-1332)).